The sequence spans 142 residues: Hemoglobin subunit alpha-5 (142 aa).

The Globin domain occupies 2–142 (TFSSAEKAAI…VSAVLVSKYR (141 aa)). Histidine 59 contributes to the O2 binding site. Histidine 88 serves as a coordination point for heme b.

This sequence belongs to the globin family. In terms of assembly, heterotetramer of two alpha chains and two beta chains. As to expression, red blood cells.

This is a larval (tadpole) alpha-globin. In Xenopus laevis (African clawed frog), this protein is Hemoglobin subunit alpha-5 (hba5).